The chain runs to 137 residues: Large ribosomal subunit protein uL16 (137 aa).

It belongs to the universal ribosomal protein uL16 family. Part of the 50S ribosomal subunit.

Functionally, binds 23S rRNA and is also seen to make contacts with the A and possibly P site tRNAs. The sequence is that of Large ribosomal subunit protein uL16 from Stutzerimonas stutzeri (strain A1501) (Pseudomonas stutzeri).